Consider the following 337-residue polypeptide: Glyceraldehyde-3-phosphate dehydrogenase 2, cytosolic (337 aa).

The binding to NAD stretch occupies residues 1–151 (MGKIKIGING…YTSDVNIVSN (151 aa)). NAD(+) is bound by residues 13-14 (RI), Asp35, and Arg82. The tract at residues 152-337 (ASCTTNCLAP…DLIRHMFKTQ (186 aa)) is catalytic. Residues 153-155 (SCT), Thr184, 213-214 (TG), and Arg236 each bind D-glyceraldehyde 3-phosphate. Cys154 (nucleophile) is an active-site residue. Asn318 contacts NAD(+).

Belongs to the glyceraldehyde-3-phosphate dehydrogenase family. Homotetramer. In terms of tissue distribution, developing seeds, seedling roots and shoots, and embryo.

Its subcellular location is the cytoplasm. It carries out the reaction D-glyceraldehyde 3-phosphate + phosphate + NAD(+) = (2R)-3-phospho-glyceroyl phosphate + NADH + H(+). Its pathway is carbohydrate degradation; glycolysis; pyruvate from D-glyceraldehyde 3-phosphate: step 1/5. In terms of biological role, key enzyme in glycolysis that catalyzes the first step of the pathway by converting D-glyceraldehyde 3-phosphate (G3P) into 3-phospho-D-glyceroyl phosphate. Essential for the maintenance of cellular ATP levels and carbohydrate metabolism. The chain is Glyceraldehyde-3-phosphate dehydrogenase 2, cytosolic (GAPC2) from Zea mays (Maize).